Here is a 274-residue protein sequence, read N- to C-terminus: Large ribosomal subunit protein uL2cz/uL2cy (274 aa).

Disordered stretches follow at residues 1 to 33 (MAIH…LIYG) and 223 to 265 (MNPV…KYND).

The protein belongs to the universal ribosomal protein uL2 family. As to quaternary structure, part of the 50S ribosomal subunit.

It is found in the plastid. The protein resides in the chloroplast. This is Large ribosomal subunit protein uL2cz/uL2cy (rpl2-A) from Pelargonium hortorum (Common geranium).